A 109-amino-acid chain; its full sequence is Putative pterin-4-alpha-carbinolamine dehydratase (109 aa).

Belongs to the pterin-4-alpha-carbinolamine dehydratase family.

The enzyme catalyses (4aS,6R)-4a-hydroxy-L-erythro-5,6,7,8-tetrahydrobiopterin = (6R)-L-erythro-6,7-dihydrobiopterin + H2O. This chain is Putative pterin-4-alpha-carbinolamine dehydratase, found in Halorhodospira halophila (strain DSM 244 / SL1) (Ectothiorhodospira halophila (strain DSM 244 / SL1)).